The chain runs to 120 residues: Cell division protein FtsL (120 aa).

The Cytoplasmic segment spans residues 1 to 36; sequence MSNLAVKYKQQAQEEVQIQTPPQQMVQPKAKAKITR. A helical membrane pass occupies residues 37-57; it reads IEKLLYVAFIGFLLYACVAFI. At 58 to 120 the chain is on the extracellular side; that stretch reads GNKAGLYQVN…INANNVKGLK (63 aa).

It belongs to the FtsL family.

The protein resides in the cell membrane. Functionally, essential cell division protein. This chain is Cell division protein FtsL, found in Bacillus anthracis.